The following is a 198-amino-acid chain: Holliday junction branch migration complex subunit RuvA (198 aa).

The tract at residues 1 to 63 is domain I; the sequence is MYSYIIGVIT…EDASILYGFS (63 aa). The interval 64-142 is domain II; that stretch reads SQKERELFNL…KDFVPSEKPV (79 aa). A flexible linker region spans residues 143–153; that stretch reads NKEVKRSNDSE. The segment at 153 to 198 is domain III; the sequence is EFAREALLQLGYFKNDVDAFIENTDISGLSIEDIMKKAMKSLDSSR.

Belongs to the RuvA family. Homotetramer. Forms an RuvA(8)-RuvB(12)-Holliday junction (HJ) complex. HJ DNA is sandwiched between 2 RuvA tetramers; dsDNA enters through RuvA and exits via RuvB. An RuvB hexamer assembles on each DNA strand where it exits the tetramer. Each RuvB hexamer is contacted by two RuvA subunits (via domain III) on 2 adjacent RuvB subunits; this complex drives branch migration. In the full resolvosome a probable DNA-RuvA(4)-RuvB(12)-RuvC(2) complex forms which resolves the HJ.

It localises to the cytoplasm. In terms of biological role, the RuvA-RuvB-RuvC complex processes Holliday junction (HJ) DNA during genetic recombination and DNA repair, while the RuvA-RuvB complex plays an important role in the rescue of blocked DNA replication forks via replication fork reversal (RFR). RuvA specifically binds to HJ cruciform DNA, conferring on it an open structure. The RuvB hexamer acts as an ATP-dependent pump, pulling dsDNA into and through the RuvAB complex. HJ branch migration allows RuvC to scan DNA until it finds its consensus sequence, where it cleaves and resolves the cruciform DNA. This Finegoldia magna (strain ATCC 29328 / DSM 20472 / WAL 2508) (Peptostreptococcus magnus) protein is Holliday junction branch migration complex subunit RuvA.